A 171-amino-acid polypeptide reads, in one-letter code: Zinc finger A20 and AN1 domain-containing stress-associated protein 8 (171 aa).

An A20-type zinc finger spans residues proline 11–glutamate 45. Positions 17, 21, 33, 36, 112, 115, 126, 128, 133, 136, 142, and 144 each coordinate Zn(2+). Residues arginine 106 to alanine 152 form an AN1-type zinc finger.

Its function is as follows. May be involved in environmental stress response. The polypeptide is Zinc finger A20 and AN1 domain-containing stress-associated protein 8 (SAP8) (Oryza sativa subsp. indica (Rice)).